A 371-amino-acid polypeptide reads, in one-letter code: Isopentenyl-diphosphate delta-isomerase (371 aa).

9–10 (RK) serves as a coordination point for substrate. FMN-binding positions include Thr-66, 67–69 (GMT), Ser-100, and Asn-128. 100-102 (SQR) contacts substrate. Position 167 (Gln-167) interacts with substrate. Glu-168 provides a ligand contact to Mg(2+). FMN-binding positions include Lys-199, Ser-224, Thr-229, 278 to 280 (GMR), and 299 to 300 (AL).

This sequence belongs to the IPP isomerase type 2 family. As to quaternary structure, homooctamer. Dimer of tetramers. The cofactor is FMN. It depends on NADPH as a cofactor. Requires Mg(2+) as cofactor.

Its subcellular location is the cytoplasm. It carries out the reaction isopentenyl diphosphate = dimethylallyl diphosphate. Its function is as follows. Involved in the biosynthesis of isoprenoids. Catalyzes the 1,3-allylic rearrangement of the homoallylic substrate isopentenyl (IPP) to its allylic isomer, dimethylallyl diphosphate (DMAPP). The protein is Isopentenyl-diphosphate delta-isomerase of Pyrococcus horikoshii (strain ATCC 700860 / DSM 12428 / JCM 9974 / NBRC 100139 / OT-3).